We begin with the raw amino-acid sequence, 222 residues long: Charged multivesicular body protein 2a (222 aa).

M1 bears the N-acetylmethionine mark. A coiled-coil region spans residues 12–53; the sequence is EELLRQNQRALNRAMRELDRERQKLETQEKKIIADIKKMAKQ. The interaction with VPS4B stretch occupies residues 56–222; sequence MDAVRIMAKD…EERLKNLRRD (167 aa). Residue S184 is modified to Phosphoserine. T185 carries the post-translational modification Phosphothreonine. Phosphoserine occurs at positions 188, 190, and 203. Residues 195–222 are a coiled coil; that stretch reads GKKAEAAASALADADADLEERLKNLRRD. Residues 210-220 carry the MIT-interacting motif motif; sequence ADLEERLKNLR. The interval 217–222 is interaction with VTA1; that stretch reads KNLRRD.

Belongs to the SNF7 family. As to quaternary structure, probable core component of the endosomal sorting required for transport complex III (ESCRT-III). ESCRT-III components are thought to multimerize to form a flat lattice on the perimeter membrane of the endosome. Several assembly forms of ESCRT-III may exist that interact and act sequentially. In vitro, heteromerizes with CHMP3 (but not CHMP4) to form helical tubular structures that expose membrane-interacting sites on the outside whereas VPS4B can associate on the inside of the tubule. Interacts with CHMP1B, CHMP2B, CHMP3, CHMP4A, CHMP4B, CHMP4C and CHMP5. Interacts with VPS4A; the interaction is direct. Interacts with VPS4B; the interaction is direct. Interacts with MITD1. Interacts with VTA1; the interaction probably involves the open conformation of CHMP2A. Post-translationally, ISGylated in a CHMP5-dependent manner. Isgylation weakens and inhibits its interactions with VPS4A and VTA1 respectively.

Its subcellular location is the late endosome membrane. The protein localises to the nucleus envelope. Functionally, probable core component of the endosomal sorting required for transport complex III (ESCRT-III) which is involved in multivesicular bodies (MVBs) formation and sorting of endosomal cargo proteins into MVBs. MVBs contain intraluminal vesicles (ILVs) that are generated by invagination and scission from the limiting membrane of the endosome and mostly are delivered to lysosomes enabling degradation of membrane proteins, such as stimulated growth factor receptors, lysosomal enzymes and lipids. The MVB pathway appears to require the sequential function of ESCRT-O, -I,-II and -III complexes. ESCRT-III proteins mostly dissociate from the invaginating membrane before the ILV is released. The ESCRT machinery also functions in topologically equivalent membrane fission events, such as the terminal stages of cytokinesis. Together with SPAST, the ESCRT-III complex promotes nuclear envelope sealing and mitotic spindle disassembly during late anaphase. Recruited to the reforming nuclear envelope (NE) during anaphase by LEMD2. ESCRT-III proteins are believed to mediate the necessary vesicle extrusion and/or membrane fission activities, possibly in conjunction with the AAA ATPase VPS4. Its function is as follows. (Microbial infection) The ESCRT machinery functions in topologically equivalent membrane fission events, such as the budding of enveloped viruses (HIV-1 and other lentiviruses). Involved in HIV-1 p6- and p9-dependent virus release. The polypeptide is Charged multivesicular body protein 2a (CHMP2A) (Homo sapiens (Human)).